Here is a 437-residue protein sequence, read N- to C-terminus: Major royal jelly protein 6 (437 aa).

An N-terminal signal peptide occupies residues 1–20 (MTNWLLLIVCLSIACQDVTS). N-linked (GlcNAc...) asparagine glycosylation is found at Asn-78, Asn-164, Asn-181, Asn-201, and Asn-324.

This sequence belongs to the major royal jelly protein family. As to expression, found in and secreted from the hypopharyngeal glands of the worker honey bee (at protein level); expression peaks at 20 days post eclosion. Expressed in the spermatheca of adult queen bees (at protein level); Expression levels are higher in mated queens than in virgin queens. Expressed at low level in the brains of adult worker bees. Protein abundance does not seem to correlate with transcript abundance.

The protein resides in the secreted. In terms of biological role, component of royal jelly, a substance produced in the hypopharyngeal gland containing proteins, free amino acids, fatty acids, sugars and other nutrients, which is fed to developing larvae by worker nurse bees. All larvae are fed some royal jelly (also known as worker jelly) early in their development but it forms the principal source of nutrition for larvae destined to become queen bees. Produced in the spermatheca of adult queen bees, along with other major royal jelly proteins, where it may act as a nutrient supply for sperm stored by mated queens, or be involved in energy metabolism. In Apis mellifera (Honeybee), this protein is Major royal jelly protein 6.